Reading from the N-terminus, the 236-residue chain is Phosphoribosylaminoimidazole-succinocarboxamide synthase (236 aa).

Belongs to the SAICAR synthetase family.

It catalyses the reaction 5-amino-1-(5-phospho-D-ribosyl)imidazole-4-carboxylate + L-aspartate + ATP = (2S)-2-[5-amino-1-(5-phospho-beta-D-ribosyl)imidazole-4-carboxamido]succinate + ADP + phosphate + 2 H(+). It functions in the pathway purine metabolism; IMP biosynthesis via de novo pathway; 5-amino-1-(5-phospho-D-ribosyl)imidazole-4-carboxamide from 5-amino-1-(5-phospho-D-ribosyl)imidazole-4-carboxylate: step 1/2. The sequence is that of Phosphoribosylaminoimidazole-succinocarboxamide synthase from Pseudomonas savastanoi pv. phaseolicola (strain 1448A / Race 6) (Pseudomonas syringae pv. phaseolicola (strain 1448A / Race 6)).